Reading from the N-terminus, the 284-residue chain is MNHVKKPDWLKINIGANARYTETKHIVDSHKLHTICSSGRCPNMGECWGKGTATFMIGGEICTRSCKFCNTQTGRPLPLDPEEPTHVAESIQLMKLSHAVITSVDRDDLDDLGAAHWAKTISEIKRLNPETTTEVLIPDFQGKSELIQLVIDAKPDIISHNMETVRRISPLVRSAANYATSLKVIKQIANNGITAKSGIMVGLGERPEEVEEVMDDLLAQGCKILTIGQYLQPTHRHYPVAEYITPDQFKQYRTIGLKKGFREVESAPLVRSSYHAEKHIKFKG.

7 residues coordinate [4Fe-4S] cluster: Cys36, Cys41, Cys47, Cys62, Cys66, Cys69, and Ser273. The Radical SAM core domain maps to 48–262 (WGKGTATFMI…RTIGLKKGFR (215 aa)).

It belongs to the radical SAM superfamily. Lipoyl synthase family. The cofactor is [4Fe-4S] cluster.

The protein localises to the cytoplasm. It catalyses the reaction [[Fe-S] cluster scaffold protein carrying a second [4Fe-4S](2+) cluster] + N(6)-octanoyl-L-lysyl-[protein] + 2 oxidized [2Fe-2S]-[ferredoxin] + 2 S-adenosyl-L-methionine + 4 H(+) = [[Fe-S] cluster scaffold protein] + N(6)-[(R)-dihydrolipoyl]-L-lysyl-[protein] + 4 Fe(3+) + 2 hydrogen sulfide + 2 5'-deoxyadenosine + 2 L-methionine + 2 reduced [2Fe-2S]-[ferredoxin]. The protein operates within protein modification; protein lipoylation via endogenous pathway; protein N(6)-(lipoyl)lysine from octanoyl-[acyl-carrier-protein]: step 2/2. Its function is as follows. Catalyzes the radical-mediated insertion of two sulfur atoms into the C-6 and C-8 positions of the octanoyl moiety bound to the lipoyl domains of lipoate-dependent enzymes, thereby converting the octanoylated domains into lipoylated derivatives. This Phocaeicola vulgatus (strain ATCC 8482 / DSM 1447 / JCM 5826 / CCUG 4940 / NBRC 14291 / NCTC 11154) (Bacteroides vulgatus) protein is Lipoyl synthase.